The following is a 184-amino-acid chain: Oligoribonuclease (184 aa).

The region spanning 8-171 (LIWIDLEMTG…DDIRESIAEL (164 aa)) is the Exonuclease domain. Residue tyrosine 129 is part of the active site.

Belongs to the oligoribonuclease family.

It is found in the cytoplasm. Its function is as follows. 3'-to-5' exoribonuclease specific for small oligoribonucleotides. The protein is Oligoribonuclease of Pasteurella multocida (strain Pm70).